The following is a 705-amino-acid chain: Dynein axonemal intermediate chain 1 (705 aa).

2 disordered regions span residues 1–44 (MPSK…AVRP) and 122–169 (AGSQ…DVPA). 2 positions are modified to phosphoserine: Ser-124 and Ser-127. Polar residues predominate over residues 124–135 (SQESVKVVTSDT). Over residues 136 to 159 (EILEEEEEPKEGEGEGEGEAEGEA) the composition is skewed to acidic residues. WD repeat units follow at residues 386 to 426 (SSES…SQPC), 435 to 478 (KHTD…LVHI), 543 to 583 (AHNM…PMFI), 585 to 625 (DLNA…YEAI), and 633 to 672 (KKKN…RKMP).

The protein belongs to the dynein intermediate chain family. Consists of at least two heavy chains and a number of intermediate and light chains. Interacts with BICD2. Interacts with CFAP45 and CFAP52. Interacts with CFAP53.

It localises to the cytoplasm. Its subcellular location is the cytoskeleton. The protein localises to the cilium axoneme. Part of the dynein complex of respiratory cilia. The protein is Dynein axonemal intermediate chain 1 (Dnai1) of Rattus norvegicus (Rat).